The chain runs to 1052 residues: 3-hydroxy-3-methylglutaryl coenzyme A reductase mokG (1052 aa).

6 consecutive transmembrane segments (helical) span residues 223–243, 253–273, 279–299, 349–369, 378–398, and 440–460; these read VDMA…VSLF, FWLA…GLGV, VPVD…TVGF, GWSI…GAVF, FCFL…TFYA, and WKLI…SSFF. Positions 224-403 constitute an SSD domain; sequence DMAIIGLGYL…FTFYATILCV (180 aa). The linker stretch occupies residues 461 to 617; it reads YRIMGGFMTN…FKANQAESLT (157 aa). The disordered stretch occupies residues 571 to 594; it reads APKESAAPAPPSSPASVPSAVPVP. The segment covering 584–594 has biased composition (low complexity); that stretch reads PASVPSAVPVP. Residues 618–1044 form a catalytic region; sequence DDELAELCLR…LVNAHMRHNR (427 aa). Residue Glu-734 is the Charge relay system of the active site. An N-linked (GlcNAc...) asparagine glycan is attached at Asn-798. Residues Lys-867 and Asp-943 each act as charge relay system in the active site. The Proton donor role is filled by His-1039. The N-linked (GlcNAc...) asparagine glycan is linked to Asn-1043.

The protein belongs to the HMG-CoA reductase family.

The protein resides in the endoplasmic reticulum membrane. The enzyme catalyses (R)-mevalonate + 2 NADP(+) + CoA = (3S)-3-hydroxy-3-methylglutaryl-CoA + 2 NADPH + 2 H(+). The protein operates within polyketide biosynthesis; lovastatin biosynthesis. Functionally, HMG-CoA reductase; part of the gene cluster that mediates the biosynthesis of monakolin K, also known as lovastatin, and which acts as a potent competitive inhibitor of HMG-CoA reductase. Monakolin K biosynthesis is performed in two stages. The first stage is catalyzed by the nonaketide synthase mokA, which belongs to type I polyketide synthases and catalyzes the iterative nine-step formation of the polyketide. This PKS stage is completed by the action of dehydrogenase mokE, which catalyzes the NADPH-dependent reduction of the unsaturated tetra-, penta- and heptaketide intermediates that arise during the mokA-mediated biosynthesis of the nonaketide chain and leads to dihydromonacolin L. Covalently bound dihydromonacolin L is released from mokA by the mokD esterase. Conversion of dihydromonacolin L into monacolin L and then monacolin J is subsequently performed with the participation of molecular oxygen and P450 monoogygenase mokC. Finally, mokF performs the conversion of monacoline J to monacoline K through the addition of the side-chain diketide moiety (2R)-2-methylbutanoate produced by the diketide synthase mokB. HMG-CoA reductase mokG may act as a down-regulator of monacolin K production. This Monascus pilosus (Red mold) protein is 3-hydroxy-3-methylglutaryl coenzyme A reductase mokG.